The primary structure comprises 346 residues: MLNVAVVGASGYTGVELLRLLYCHPEVAVTCITSEQSAGRPVAAVFPTLRSRYTQVLENLEPVKVAQKADLIFTALPHKAAMEVVPTFLELGKRVVDLSADYRFNDPAVYEKWYEPHMNPENLKEAVYGLPEIRREKIGDAWLVGNPGCYPTSVILGLMPLLKKRLIDPSTIIADSKSGVSGAGRGAKVENLYCEVNDGFKAYGVGGVHRHIPEIEQELSLLAGGPITITFTPHLVPMDRGILSTIYARLTGTDSVAELVKLYAEFYEGEPFVRVLPAGNVPSTAHVRGSNFCDIGLAVDSRTGRVIVVSAIDNLVKGAAGQAVQNMNIMYGFPETMGLEGLPLFP.

Cysteine 149 is an active-site residue.

The protein belongs to the NAGSA dehydrogenase family. Type 1 subfamily.

The protein resides in the cytoplasm. It catalyses the reaction N-acetyl-L-glutamate 5-semialdehyde + phosphate + NADP(+) = N-acetyl-L-glutamyl 5-phosphate + NADPH + H(+). Its pathway is amino-acid biosynthesis; L-arginine biosynthesis; N(2)-acetyl-L-ornithine from L-glutamate: step 3/4. Its function is as follows. Catalyzes the NADPH-dependent reduction of N-acetyl-5-glutamyl phosphate to yield N-acetyl-L-glutamate 5-semialdehyde. The sequence is that of N-acetyl-gamma-glutamyl-phosphate reductase from Geobacter metallireducens (strain ATCC 53774 / DSM 7210 / GS-15).